Reading from the N-terminus, the 114-residue chain is Immunoglobulin kappa variable 6D-21 (114 aa).

Positions 1–19 (MSPSQLIGFLLLWVPASRG) are cleaved as a signal peptide. The interval 20 to 42 (EIVLTQSPDFQSVTPKEKVTITC) is framework-1. The region spanning 20–114 (EIVLTQSPDF…YYCHQSSSLP (95 aa)) is the Ig-like domain. A disulfide bond links cysteine 42 and cysteine 107. Positions 43–53 (RASQSIGSSLH) are complementarity-determining-1. The tract at residues 54–68 (WYQQKPDQSPKLLIK) is framework-2. The complementarity-determining-2 stretch occupies residues 69-75 (YASQSIS). A framework-3 region spans residues 76–107 (GVPSRFSGSGSGTDFTLTINSLEAEDAAAYYC). The segment at 108-114 (HQSSSLP) is complementarity-determining-3.

As to quaternary structure, immunoglobulins are composed of two identical heavy chains and two identical light chains; disulfide-linked.

The protein resides in the secreted. Its subcellular location is the cell membrane. In terms of biological role, v region of the variable domain of immunoglobulin light chains that participates in the antigen recognition. Immunoglobulins, also known as antibodies, are membrane-bound or secreted glycoproteins produced by B lymphocytes. In the recognition phase of humoral immunity, the membrane-bound immunoglobulins serve as receptors which, upon binding of a specific antigen, trigger the clonal expansion and differentiation of B lymphocytes into immunoglobulins-secreting plasma cells. Secreted immunoglobulins mediate the effector phase of humoral immunity, which results in the elimination of bound antigens. The antigen binding site is formed by the variable domain of one heavy chain, together with that of its associated light chain. Thus, each immunoglobulin has two antigen binding sites with remarkable affinity for a particular antigen. The variable domains are assembled by a process called V-(D)-J rearrangement and can then be subjected to somatic hypermutations which, after exposure to antigen and selection, allow affinity maturation for a particular antigen. The sequence is that of Immunoglobulin kappa variable 6D-21 from Homo sapiens (Human).